The sequence spans 454 residues: Cathepsin C (454 aa).

The first 20 residues, 1–20 (MHWVFHCILIILACLRFTCA), serve as a signal peptide directing secretion. Residues 21–217 (DTPANCTYED…SKELISLTGN (197 aa)) constitute a propeptide that is removed on maturation. N-linked (GlcNAc...) asparagine glycosylation is present at Asn-25. 3 disulfide bridges follow: Cys-26–Cys-107, Cys-244–Cys-287, and Cys-280–Cys-321. Cys-247 is a catalytic residue. Residue Asn-265 is glycosylated (N-linked (GlcNAc...) asparagine). Phe-291 contributes to the chloride binding site. Asn-326 carries N-linked (GlcNAc...) asparagine glycosylation. Tyr-337 contributes to the chloride binding site. Catalysis depends on residues His-398 and Asn-420.

The protein belongs to the peptidase C1 family. Requires chloride as cofactor.

The protein resides in the lysosome. In terms of biological role, thiol protease. Has a role as a digestive enzyme. The chain is Cathepsin C from Schistosoma mansoni (Blood fluke).